The chain runs to 103 residues: Large ribosomal subunit protein uL24 (103 aa).

This sequence belongs to the universal ribosomal protein uL24 family. Part of the 50S ribosomal subunit.

Functionally, one of two assembly initiator proteins, it binds directly to the 5'-end of the 23S rRNA, where it nucleates assembly of the 50S subunit. One of the proteins that surrounds the polypeptide exit tunnel on the outside of the subunit. The polypeptide is Large ribosomal subunit protein uL24 (Agathobacter rectalis (strain ATCC 33656 / DSM 3377 / JCM 17463 / KCTC 5835 / VPI 0990) (Eubacterium rectale)).